Here is an 87-residue protein sequence, read N- to C-terminus: Class II metallothionein-like protein 1A (87 aa).

It belongs to the metallothionein superfamily. Type 15 family. In terms of tissue distribution, expressed in developing seeds.

Metallothioneins have a high content of cysteine residues that bind various heavy metals. The chain is Class II metallothionein-like protein 1A (MT21A) from Oryza sativa subsp. japonica (Rice).